We begin with the raw amino-acid sequence, 293 residues long: AKT-interacting protein (293 aa).

Residues M1–S11 are compositionally biased toward polar residues. Residues M1 to T63 form a disordered region. Positions K14 to L23 are enriched in basic and acidic residues. A Phosphoserine modification is found at S30. The UBC core domain occupies Y74–A222. Positions M253–N265 are enriched in basic and acidic residues. A disordered region spans residues M253–T293.

Belongs to the ubiquitin-conjugating enzyme family. FTS subfamily. As to quaternary structure, component of the FTS/Hook/FHIP complex (FHF complex), composed of AKTIP/FTS, FHIP1B, and one or more members of the Hook family of proteins HOOK1, HOOK2, and HOOK3. Interacts directly with HOOK1, HOOK2 and HOOK3. The FHF complex associates with the homotypic vesicular sorting complex (the HOPS complex). Also interacts with AKT1. May interact with FHIP1A.

The protein resides in the cytoplasm. It is found in the cell membrane. Its function is as follows. Component of the FTS/Hook/FHIP complex (FHF complex). The FHF complex may function to promote vesicle trafficking and/or fusion via the homotypic vesicular protein sorting complex (the HOPS complex). Regulates apoptosis by enhancing phosphorylation and activation of AKT1. Increases release of TNFSF6 via the AKT1/GSK3B/NFATC1 signaling cascade. FHF complex promotes the distribution of AP-4 complex to the perinuclear area of the cell. The polypeptide is AKT-interacting protein (AKTIP) (Pongo abelii (Sumatran orangutan)).